Here is a 210-residue protein sequence, read N- to C-terminus: dTTP/UTP pyrophosphatase (210 aa).

Over residues 1-15 the composition is skewed to basic and acidic residues; that stretch reads MTHGDNRDGPGRETR. The segment at 1 to 22 is disordered; it reads MTHGDNRDGPGRETRSSGPLVL. D86 serves as the catalytic Proton acceptor.

The protein belongs to the Maf family. YhdE subfamily. It depends on a divalent metal cation as a cofactor.

Its subcellular location is the cytoplasm. It catalyses the reaction dTTP + H2O = dTMP + diphosphate + H(+). The catalysed reaction is UTP + H2O = UMP + diphosphate + H(+). Functionally, nucleoside triphosphate pyrophosphatase that hydrolyzes dTTP and UTP. May have a dual role in cell division arrest and in preventing the incorporation of modified nucleotides into cellular nucleic acids. The sequence is that of dTTP/UTP pyrophosphatase from Rhodospirillum rubrum (strain ATCC 11170 / ATH 1.1.1 / DSM 467 / LMG 4362 / NCIMB 8255 / S1).